The following is a 369-amino-acid chain: Glutamate 5-kinase (369 aa).

Lys14 is an ATP binding site. Residues Ser56, Asp143, and Asn155 each contribute to the substrate site. ATP is bound by residues 175-176 (SD) and 215-221 (TGGMASK). One can recognise a PUA domain in the interval 277-351 (AGKIRLDQGA…GMKTQELPDD (75 aa)).

It belongs to the glutamate 5-kinase family.

It localises to the cytoplasm. The catalysed reaction is L-glutamate + ATP = L-glutamyl 5-phosphate + ADP. It functions in the pathway amino-acid biosynthesis; L-proline biosynthesis; L-glutamate 5-semialdehyde from L-glutamate: step 1/2. Its function is as follows. Catalyzes the transfer of a phosphate group to glutamate to form L-glutamate 5-phosphate. This chain is Glutamate 5-kinase, found in Corynebacterium efficiens (strain DSM 44549 / YS-314 / AJ 12310 / JCM 11189 / NBRC 100395).